We begin with the raw amino-acid sequence, 282 residues long: Putative 1-acyl-sn-glycerol-3-phosphate acyltransferase acl-2 (282 aa).

2 helical membrane passes run phenylalanine 4–threonine 24 and isoleucine 32–proline 52. Positions histidine 98–aspartate 103 match the HXXXXD motif motif. Residues isoleucine 122–aspartate 142 form a helical membrane-spanning segment.

The protein belongs to the 1-acyl-sn-glycerol-3-phosphate acyltransferase family.

The protein localises to the membrane. It carries out the reaction a 1-acyl-sn-glycero-3-phosphate + an acyl-CoA = a 1,2-diacyl-sn-glycero-3-phosphate + CoA. Its pathway is phospholipid metabolism; CDP-diacylglycerol biosynthesis; CDP-diacylglycerol from sn-glycerol 3-phosphate: step 2/3. Functionally, converts lysophosphatidic acid (LPA) into phosphatidic acid by incorporating an acyl moiety at the sn-2 position of the glycerol backbone. The sequence is that of Putative 1-acyl-sn-glycerol-3-phosphate acyltransferase acl-2 (acl-2) from Caenorhabditis elegans.